Reading from the N-terminus, the 237-residue chain is rRNA-processing protein EFG1 (237 aa).

The tract at residues 1 to 24 (MPKTVKNPKNNKSRSRGAPIQVAE) is disordered. Coiled-coil stretches lie at residues 53-113 (DKKI…ISQT) and 166-186 (LKITEERRREFRKYIEKLMEE). Residues 206–237 (NDKTQKAVLTEEIDAPEQKQDEQQEEQDDFFE) form a disordered region. Acidic residues predominate over residues 228-237 (QQEEQDDFFE).

Belongs to the EFG1 family.

It is found in the nucleus. Its subcellular location is the nucleolus. Involved in rRNA processing. This is rRNA-processing protein EFG1 from Candida albicans (strain SC5314 / ATCC MYA-2876) (Yeast).